The chain runs to 338 residues: Glyceraldehyde-3-phosphate dehydrogenase (338 aa).

NAD(+)-binding positions include 13-14, Asp35, and Arg80; that span reads RI. Residues 151–153, Thr182, 211–212, and Arg234 each bind D-glyceraldehyde 3-phosphate; these read SCT and TG. Cys152 serves as the catalytic Nucleophile. Asn316 contributes to the NAD(+) binding site.

Belongs to the glyceraldehyde-3-phosphate dehydrogenase family. In terms of assembly, homotetramer.

It is found in the cytoplasm. The catalysed reaction is D-glyceraldehyde 3-phosphate + phosphate + NAD(+) = (2R)-3-phospho-glyceroyl phosphate + NADH + H(+). Its pathway is carbohydrate degradation; glycolysis; pyruvate from D-glyceraldehyde 3-phosphate: step 1/5. This Sclerotinia sclerotiorum (White mold) protein is Glyceraldehyde-3-phosphate dehydrogenase (GPD).